Here is a 4749-residue protein sequence, read N- to C-terminus: Dynein heavy chain domain-containing protein 1 (4749 aa).

A compositionally biased stretch (low complexity) spans 1 to 18 (MKPHSQTSPPSLPMPSTS). Disordered regions lie at residues 1 to 27 (MKPH…TQKP), 275 to 308 (ESSD…KKSS), and 2690 to 2785 (ESLA…KLQS). The segment covering 2696-2716 (CEEEEVEEEKVPEVESEEEIA) has biased composition (acidic residues). Residues 2738 to 2749 (QATTGSFLSENS) are compositionally biased toward polar residues. A coiled-coil region spans residues 3197 to 3224 (CQHQESLIENLVRQHDALKAQQEVFLEQ). Residues 3568–3667 (PPKQNRSLEP…SLPSCLTVLS (100 aa)) form a disordered region. Residues 3578–3593 (SPKESKEKFHVTKQDS) are compositionally biased toward basic and acidic residues. Residues 3594 to 3636 (GDNTEDELEDENNEEEDEANEQRKEQKAEENKIQGENEQEVQE) adopt a coiled-coil conformation. A compositionally biased stretch (acidic residues) spans 3595–3612 (DNTEDELEDENNEEEDEA). A compositionally biased stretch (basic and acidic residues) spans 3613 to 3628 (NEQRKEQKAEENKIQG). The segment covering 3644–3655 (ESSGSHSSLPSE) has biased composition (low complexity). The span at 3656-3667 (TQSLPSCLTVLS) shows a compositional bias: polar residues. Coiled coils occupy residues 3818–3838 (MVRT…LEDQ) and 4431–4451 (ERQL…LQAL).

The protein belongs to the dynein heavy chain family. As to expression, expressed in spermatozoa (at protein level).

It is found in the cell projection. The protein resides in the cilium. The protein localises to the flagellum. Essential for the normal function of sperm flagella axonemes. The protein is Dynein heavy chain domain-containing protein 1 (Dnhd1) of Mus musculus (Mouse).